We begin with the raw amino-acid sequence, 524 residues long: Alkaline phosphatase, tissue-nonspecific isozyme (524 aa).

Residues 1–17 (MISPFLVLAIGTCLTNS) form the signal peptide. Asp60 serves as a coordination point for Mg(2+). Zn(2+) contacts are provided by Asp60 and Ser110. Ser110 serves as the catalytic Phosphoserine intermediate. The residue at position 110 (Ser110) is a Phosphoserine. A disulfide bond links Cys139 and Cys201. An N-linked (GlcNAc...) asparagine glycan is attached at Asn140. Thr173 serves as a coordination point for Mg(2+). N-linked (GlcNAc...) asparagine glycosylation is present at Asn230. Glu235 contacts Ca(2+). Asn271 carries an N-linked (GlcNAc...) asparagine glycan. Residues Phe290 and Glu291 each coordinate Ca(2+). Residue Asn302 is glycosylated (N-linked (GlcNAc...) asparagine). Asp306 is a Ca(2+) binding site. Glu332 is a binding site for Mg(2+). Residues Asp337, His341, Asp378, and His379 each contribute to the Zn(2+) site. The N-linked (GlcNAc...) asparagine glycan is linked to Asn430. His454 serves as a coordination point for Zn(2+). Cys489 and Cys497 are oxidised to a cystine. Residue Ser499 is the site of GPI-anchor amidated serine attachment. The propeptide at 500–524 (ASSAGGPSPGPLFLLLALPSLGILF) is removed in mature form.

It belongs to the alkaline phosphatase family. Homodimer. Requires Mg(2+) as cofactor. Zn(2+) serves as cofactor. It depends on Ca(2+) as a cofactor. In terms of processing, N-glycosylated.

The protein resides in the cell membrane. The protein localises to the extracellular vesicle membrane. It localises to the mitochondrion membrane. Its subcellular location is the mitochondrion intermembrane space. It catalyses the reaction a phosphate monoester + H2O = an alcohol + phosphate. The catalysed reaction is diphosphate + H2O = 2 phosphate + H(+). The enzyme catalyses pyridoxal 5'-phosphate + H2O = pyridoxal + phosphate. It carries out the reaction phosphoethanolamine + H2O = ethanolamine + phosphate. It catalyses the reaction N-phosphocreatine + H2O = creatine + phosphate. The catalysed reaction is ATP + H2O = ADP + phosphate + H(+). The enzyme catalyses ADP + H2O = AMP + phosphate + H(+). It carries out the reaction AMP + H2O = adenosine + phosphate. Its activity is regulated as follows. Phosphatase activity is specifically inhibited by 5-((5-chloro-2-methoxyphenyl)sulfonamido)nicotinamide (SBI-425). Its function is as follows. Alkaline phosphatase that metabolizes various phosphate compounds and plays a key role in skeletal mineralization and adaptive thermogenesis. Has broad substrate specificity and can hydrolyze a considerable variety of compounds: however, only a few substrates, such as diphosphate (inorganic pyrophosphate; PPi), pyridoxal 5'-phosphate (PLP) and N-phosphocreatine are natural substrates. Plays an essential role in skeletal and dental mineralization via its ability to hydrolyze extracellular diphosphate, a potent mineralization inhibitor, to phosphate: it thereby promotes hydroxyapatite crystal formation and increases inorganic phosphate concentration. Acts in a non-redundant manner with PHOSPHO1 in skeletal mineralization: while PHOSPHO1 mediates the initiation of hydroxyapatite crystallization in the matrix vesicles (MVs), ALPL/TNAP catalyzes the spread of hydroxyapatite crystallization in the extracellular matrix. Also promotes dephosphorylation of osteopontin (SSP1), an inhibitor of hydroxyapatite crystallization in its phosphorylated state; it is however unclear whether ALPL/TNAP mediates SSP1 dephosphorylation via a direct or indirect manner. Catalyzes dephosphorylation of PLP to pyridoxal (PL), the transportable form of vitamin B6, in order to provide a sufficient amount of PLP in the brain, an essential cofactor for enzymes catalyzing the synthesis of diverse neurotransmitters. Additionally, also able to mediate ATP degradation in a stepwise manner to adenosine, thereby regulating the availability of ligands for purinergic receptors. Also capable of dephosphorylating microbial products, such as lipopolysaccharides (LPS) as well as other phosphorylated small-molecules, such as poly-inosine:cytosine (poly I:C). Acts as a key regulator of adaptive thermogenesis as part of the futile creatine cycle: localizes to the mitochondria of thermogenic fat cells and acts by mediating hydrolysis of N-phosphocreatine to initiate a futile cycle of creatine dephosphorylation and phosphorylation. During the futile creatine cycle, creatine and N-phosphocreatine are in a futile cycle, which dissipates the high energy charge of N-phosphocreatine as heat without performing any mechanical or chemical work. This Felis catus (Cat) protein is Alkaline phosphatase, tissue-nonspecific isozyme (ALPL).